A 441-amino-acid chain; its full sequence is Alpha-monoglucosyldiacylglycerol synthase (441 aa).

It belongs to the glycosyltransferase group 1 family. Glycosyltransferase 4 subfamily. The cofactor is Mg(2+).

The protein localises to the cell membrane. It carries out the reaction a 1,2-diacyl-sn-glycerol + UDP-alpha-D-glucose = a 1,2-diacyl-3-O-(alpha-D-glucopyranosyl)-sn-glycerol + UDP + H(+). With respect to regulation, activated by the negatively charged lipid phosphatidylglycerol (PG). In terms of biological role, glucosyltransferase involved in the biosynthesis of the non-bilayer-prone membrane lipid alpha-monoglucosyldiacylglycerol. This is a major component for maintaining a certain anionic lipid surface charge density, for balancing the bilayer to non-bilayer phase equilibria and for keeping a constant lipid bilayer spontaneous curvature (curvature packing stress). Catalyzes the transfer of a glucosyl residue from UDP-Glc to diacylglycerol (DAG) acceptor to form the corresponding alpha-glucosyl-DAG (1,2-diacyl-3-O-(alpha-D-glucopyranosyl)-sn-glycerol). It can only use UDP-Glc as sugar donor. In Streptococcus pneumoniae (strain ATCC BAA-255 / R6), this protein is Alpha-monoglucosyldiacylglycerol synthase.